Here is a 389-residue protein sequence, read N- to C-terminus: Lipid-A-disaccharide synthase (389 aa).

It belongs to the LpxB family.

The catalysed reaction is a lipid X + a UDP-2-N,3-O-bis[(3R)-3-hydroxyacyl]-alpha-D-glucosamine = a lipid A disaccharide + UDP + H(+). It participates in bacterial outer membrane biogenesis; LPS lipid A biosynthesis. Functionally, condensation of UDP-2,3-diacylglucosamine and 2,3-diacylglucosamine-1-phosphate to form lipid A disaccharide, a precursor of lipid A, a phosphorylated glycolipid that anchors the lipopolysaccharide to the outer membrane of the cell. The sequence is that of Lipid-A-disaccharide synthase from Burkholderia lata (strain ATCC 17760 / DSM 23089 / LMG 22485 / NCIMB 9086 / R18194 / 383).